A 239-amino-acid polypeptide reads, in one-letter code: Sensory rhodopsin-1 (239 aa).

The Extracellular portion of the chain corresponds to 1–3 (MDA). Residues 4 to 25 (VATAYLGGAVALIVGVAFVWLL) traverse the membrane as a helical segment. At 26-34 (YRSLDGSPH) the chain is on the cytoplasmic side. A helical membrane pass occupies residues 35-56 (QSALAPLAIIPVFAGLSYVGMA). Topologically, residues 57-70 (YDIGTVIVNGNQIV) are extracellular. Residues 71 to 92 (GLRYIDWLVTTPILVGYVGYAA) traverse the membrane as a helical segment. Over 93-95 (GAS) the chain is Cytoplasmic. A helical transmembrane segment spans residues 96-118 (RRSIIGVMVADALMIAVGAGAVV). Residues 119–122 (TDGT) lie on the Extracellular side of the membrane. The helical transmembrane segment at 123–150 (LKWALFGVSSIFHLSLFAYLYVIFPRVV) threads the bilayer. The Cytoplasmic segment spans residues 151 to 153 (PDV). Residues 154–181 (PEQIGLFNLLKNHIGLLWLAYPLVWLFG) traverse the membrane as a helical segment. Over 182 to 189 (PAGIGEAT) the chain is Extracellular. A helical transmembrane segment spans residues 190 to 222 (AAGVALTYVFLDVLAKVPYVYFFYARRRVFMHS). An N6-(retinylidene)lysine modification is found at K205. The Cytoplasmic segment spans residues 223–239 (ESPPAPEQATVEATAAD).

It belongs to the archaeal/bacterial/fungal opsin family. As to quaternary structure, interacts with HTR-I.

It localises to the cell membrane. In terms of biological role, involved in the control of phototaxis. Mediates both photoattractant (in the orange light) and photophobic (in the near UV light) responses. The signal is then transmitted to the sensory rhodopsin I transducer (HTR-I). This chain is Sensory rhodopsin-1 (sopI), found in Halobacterium salinarum (strain ATCC 29341 / DSM 671 / R1).